Reading from the N-terminus, the 336-residue chain is Flavonol synthase/flavanone 3-hydroxylase (336 aa).

Residues 99–118 form a disordered region; sequence EKESVAKPEDSKDIEGYGTK. A Fe2OG dioxygenase domain is found at 196–296; the sequence is MAEYMMKINY…RMSWPVFLEP (101 aa). 204-206 contacts 2-oxoglutarate; the sequence is NYY. Fe cation contacts are provided by H221, D223, and H277. Residue 287-289 participates in 2-oxoglutarate binding; the sequence is RMS.

This sequence belongs to the iron/ascorbate-dependent oxidoreductase family. The cofactor is L-ascorbate. Fe(2+) serves as cofactor. As to expression, expressed in young seedlings (at protein level). Expressed in roots, emerging leaves, shoot-root transition zone, trichomes, flowers and siliques. In cotyledons, expressed mostly on the adaxial side and only in guard cells on the abaxial side.

The protein localises to the cytoplasm. It is found in the nucleus. The catalysed reaction is a (2R,3R)-dihydroflavonol + 2-oxoglutarate + O2 = a flavonol + succinate + CO2 + H2O. The enzyme catalyses a (2S)-flavan-4-one + 2-oxoglutarate + O2 = a (2R,3R)-dihydroflavonol + succinate + CO2. It participates in secondary metabolite biosynthesis; flavonoid biosynthesis. Its function is as follows. Catalyzes the formation of flavonols from dihydroflavonols. It can act on dihydrokaempferol to produce kaempferol, on dihydroquercetin to produce quercitin and on dihydromyricetin to produce myricetin. In vitro catalyzes the oxidation of both enantiomers of naringenin to give both cis- and trans-dihydrokaempferol. In Arabidopsis thaliana (Mouse-ear cress), this protein is Flavonol synthase/flavanone 3-hydroxylase (FLS1).